Reading from the N-terminus, the 522-residue chain is Sugar transport protein 1 (522 aa).

Residues 1 to 22 lie on the Cytoplasmic side of the membrane; it reads MPAGGFVVGDGQKAYPGKLTPF. A helical membrane pass occupies residues 23 to 43; sequence VLFTCVVAAMGGLIFGYDIGI. Over 44–79 the chain is Extracellular; it reads SGGVTSMPSFLKRFFPSVYRKQQEDASTNQYCQYDS. Residues 80-100 traverse the membrane as a helical segment; it reads PTLTMFTSSLYLAALISSLVA. Over 101-117 the chain is Cytoplasmic; that stretch reads STVTRKFGRRLSMLFGG. Residues 118 to 138 traverse the membrane as a helical segment; it reads ILFCAGALINGFAKHVWMLIV. At 139 to 140 the chain is on the extracellular side; sequence GR. The chain crosses the membrane as a helical span at residues 141–161; sequence ILLGFGIGFANQAVPLYLSEM. Topologically, residues 162–171 are cytoplasmic; that stretch reads APYKYRGALN. A helical transmembrane segment spans residues 172-192; that stretch reads IGFQLSITIGILVAEVLNYFF. The Extracellular portion of the chain corresponds to 193–202; that stretch reads AKIKGGWGWR. Residues 203–223 traverse the membrane as a helical segment; it reads LSLGGAVVPALIITIGSLVLP. Residues 224 to 289 lie on the Cytoplasmic side of the membrane; sequence DTPNSMIERG…YRPHLTMAVM (66 aa). The residue at position 252 (S252) is a Phosphoserine. The helical transmembrane segment at 290–310 threads the bilayer; the sequence is IPFFQQLTGINVIMFYAPVLF. Residues 311 to 321 lie on the Extracellular side of the membrane; that stretch reads NTIGFTTDASL. The helical transmembrane segment at 322–342 threads the bilayer; that stretch reads MSAVVTGSVNVAATLVSIYGV. Residues 343-348 lie on the Cytoplasmic side of the membrane; sequence DRWGRR. Residues 349–369 traverse the membrane as a helical segment; the sequence is FLFLEGGTQMLICQAVVAACI. Over 370–384 the chain is Extracellular; the sequence is GAKFGVDGTPGELPK. A helical membrane pass occupies residues 385-405; the sequence is WYAIVVVTFICIYVAGFAWSW. The Cytoplasmic portion of the chain corresponds to 406-427; the sequence is GPLGWLVPSEIFPLEIRSAAQS. A helical membrane pass occupies residues 428–448; sequence ITVSVNMIFTFIIAQIFLTML. Topologically, residues 449–452 are extracellular; the sequence is CHLK. Residues 453–473 traverse the membrane as a helical segment; that stretch reads FGLFLVFAFFVVVMSIFVYIF. The Cytoplasmic segment spans residues 474-522; sequence LPETKGIPIEEMGQVWRSHWYWSRFVEDGEYGNALEMGKNSNQAGTKHV.

Belongs to the major facilitator superfamily. Sugar transporter (TC 2.A.1.1) family. As to expression, mostly expressed in young leaves, especially in guard cells (at protein level). Also present in roots.

Its subcellular location is the cell membrane. Its function is as follows. Major hexose transporter. Mediates an active uptake of hexoses, by sugar/hydrogen symport. Can transport glucose, 3-O-methylglucose, fructose, xylose, mannose, galactose, fucose, 2-deoxyglucose and arabinose. Confers sensitivity to galactose in seedlings. This Arabidopsis thaliana (Mouse-ear cress) protein is Sugar transport protein 1 (STP1).